Here is a 498-residue protein sequence, read N- to C-terminus: Lysine--tRNA ligase (498 aa).

Positions 407 and 414 each coordinate Mg(2+).

This sequence belongs to the class-II aminoacyl-tRNA synthetase family. Homodimer. It depends on Mg(2+) as a cofactor.

The protein localises to the cytoplasm. It catalyses the reaction tRNA(Lys) + L-lysine + ATP = L-lysyl-tRNA(Lys) + AMP + diphosphate. The chain is Lysine--tRNA ligase from Rhizobium etli (strain ATCC 51251 / DSM 11541 / JCM 21823 / NBRC 15573 / CFN 42).